Consider the following 420-residue polypeptide: Tryptophan--tRNA ligase (420 aa).

Positions 72–80 (PSGLPHFGH) match the 'HIGH' region motif. Residues 308–312 (KMSSS) carry the 'KMSKS' region motif.

The protein belongs to the class-I aminoacyl-tRNA synthetase family.

The protein resides in the cytoplasm. The catalysed reaction is tRNA(Trp) + L-tryptophan + ATP = L-tryptophyl-tRNA(Trp) + AMP + diphosphate + H(+). The protein is Tryptophan--tRNA ligase of Archaeoglobus fulgidus (strain ATCC 49558 / DSM 4304 / JCM 9628 / NBRC 100126 / VC-16).